Consider the following 295-residue polypeptide: UDP-N-acetylenolpyruvoylglucosamine reductase (295 aa).

An FAD-binding PCMH-type domain is found at 26–189 (VGGRADVLFK…VEAEFKGVNS (164 aa)). Residue R169 is part of the active site. Residue C218 is the Proton donor of the active site. The active site involves E288.

This sequence belongs to the MurB family. FAD is required as a cofactor.

It is found in the cytoplasm. The enzyme catalyses UDP-N-acetyl-alpha-D-muramate + NADP(+) = UDP-N-acetyl-3-O-(1-carboxyvinyl)-alpha-D-glucosamine + NADPH + H(+). It participates in cell wall biogenesis; peptidoglycan biosynthesis. In terms of biological role, cell wall formation. The chain is UDP-N-acetylenolpyruvoylglucosamine reductase from Wolbachia pipientis wMel.